Here is a 632-residue protein sequence, read N- to C-terminus: 1-deoxy-D-xylulose-5-phosphate synthase (632 aa).

Thiamine diphosphate is bound by residues His-75 and 117 to 119 (GHA). A Mg(2+)-binding site is contributed by Asp-146. Thiamine diphosphate is bound by residues 147–148 (AA), Asn-175, and Glu-370. Asn-175 contacts Mg(2+).

Belongs to the transketolase family. DXPS subfamily. As to quaternary structure, homodimer. Mg(2+) is required as a cofactor. Thiamine diphosphate serves as cofactor.

The catalysed reaction is D-glyceraldehyde 3-phosphate + pyruvate + H(+) = 1-deoxy-D-xylulose 5-phosphate + CO2. It functions in the pathway metabolic intermediate biosynthesis; 1-deoxy-D-xylulose 5-phosphate biosynthesis; 1-deoxy-D-xylulose 5-phosphate from D-glyceraldehyde 3-phosphate and pyruvate: step 1/1. In terms of biological role, catalyzes the acyloin condensation reaction between C atoms 2 and 3 of pyruvate and glyceraldehyde 3-phosphate to yield 1-deoxy-D-xylulose-5-phosphate (DXP). In Chlamydia muridarum (strain MoPn / Nigg), this protein is 1-deoxy-D-xylulose-5-phosphate synthase.